We begin with the raw amino-acid sequence, 251 residues long: Auxin-responsive protein IAA29 (251 aa).

The EAR-like (transcriptional repression) motif lies at 3 to 7 (LDLGL). The 88-residue stretch at 159–246 (SMYVKVKMDG…SIIRDRPCAY (88 aa)) folds into the PB1 domain.

This sequence belongs to the Aux/IAA family. In terms of assembly, homodimers and heterodimers.

It localises to the nucleus. Aux/IAA proteins are short-lived transcriptional factors that function as repressors of early auxin response genes at low auxin concentrations. Repression is thought to result from the interaction with auxin response factors (ARFs), proteins that bind to the auxin-responsive promoter element (AuxRE). Formation of heterodimers with ARF proteins may alter their ability to modulate early auxin response genes expression. This chain is Auxin-responsive protein IAA29 (IAA29), found in Arabidopsis thaliana (Mouse-ear cress).